A 489-amino-acid chain; its full sequence is Tripartite motif-containing protein 10 (489 aa).

An RING-type zinc finger spans residues C16–K61. The B box-type zinc finger occupies E94–L135. Residues C99, H102, C121, and H127 each coordinate Zn(2+). Positions E144–T180 form a coiled coil. Positions Q292 to V486 constitute a B30.2/SPRY domain.

It belongs to the TRIM/RBCC family. As to quaternary structure, interacts with IFNAR1; this interaction prevents association of IFNAR1 with TYK2. Expressed in embryonic liver.

The protein localises to the cytoplasm. E3 ligase that plays an essential role in the differentiation and survival of terminal erythroid cells. May directly bind to PTEN and promote its ubiquitination, resulting in its proteasomal degradation and activation of hypertrophic signaling. In addition, plays a role in immune response regulation by repressing the phosphorylation of STAT1 and STAT2 in the interferon/JAK/STAT signaling pathway independent of its E3 ligase activity. Mechanistically, interacts with the intracellular domain of IFNAR1 and thereby inhibits the association between TYK2 and IFNAR1. This is Tripartite motif-containing protein 10 (Trim10) from Mus musculus (Mouse).